The following is a 338-amino-acid chain: Cytoskeleton protein RodZ (338 aa).

The Cytoplasmic segment spans residues 1 to 111 (MNTEASQDQT…LGKKHKKRDG (111 aa)). Positions 19–79 (LRQAREALGL…KLVHLPEDEL (61 aa)) constitute an HTH cro/C1-type domain. The segment at residues 30-49 (QQMVAERLCLKVSTIRDIEE) is a DNA-binding region (H-T-H motif). The helical; Signal-anchor for type II membrane protein transmembrane segment at 112-132 (WLMSFTWLIVLVVLGLTGAWW) threads the bilayer. The Periplasmic segment spans residues 133–338 (WQNHQAQQAE…RVARLTVGVE (206 aa)). Composition is skewed to polar residues over residues 151–163 (SAQL…QSVP) and 180–195 (PVAN…NGTV). The tract at residues 151-253 (SAQLSQNGGQ…LPTADAGVTG (103 aa)) is disordered. Positions 196–209 (PATSSAAPADTANN) are enriched in low complexity. The segment covering 210–241 (GVNTTAPQGTTSAESAVVSPSQAPLPSVSTAQ) has biased composition (polar residues).

It belongs to the RodZ family.

Its subcellular location is the cell inner membrane. Cytoskeletal protein that is involved in cell-shape control through regulation of the length of the long axis. This is Cytoskeleton protein RodZ from Yersinia enterocolitica serotype O:8 / biotype 1B (strain NCTC 13174 / 8081).